Reading from the N-terminus, the 258-residue chain is 5'-nucleotidase SurE (258 aa).

Residues Asp14, Asp15, Ser45, and Asn101 each contribute to the a divalent metal cation site.

The protein belongs to the SurE nucleotidase family. A divalent metal cation serves as cofactor.

The protein localises to the cytoplasm. It catalyses the reaction a ribonucleoside 5'-phosphate + H2O = a ribonucleoside + phosphate. Nucleotidase that shows phosphatase activity on nucleoside 5'-monophosphates. The protein is 5'-nucleotidase SurE of Chlorobium limicola (strain DSM 245 / NBRC 103803 / 6330).